A 435-amino-acid chain; its full sequence is MTITNQQLFERSRQYIPGGVNSPVRAFKSVGGTPVFFQRGQGAYFWDVEGKSYIDYVGSWGPLILGHAHPDVVRAVQIAAGHGTSFGAPTAAELEIAELLCRLLPSLEMVRLVSSGTEAGMSAIRLARGYTGRNRIIKFEGCYHGHDDALLVKAGSGALTFGHPSSAGVPAETAGHTLVLNYNDVAGVEETFSKMGTEIAAVIVEPVAGNMNLIKATSQFLETLRTLCTKHGSLLILDEVMTGFRVGLECAQGLYGIKPDLTILGKVIGGGLPMAAFGGRRDVMECLAPLGSVYQAGTLSGNPVAVAAGLETLHQIQVPGFFDKLSTMTRKLTEGLTAVAAKHSVAFCAQAVGGMFGLYFRKSPPESFAEVMESDREAFNHFFHAMLKEGVYFAPSAFEAGFVSAAHSNEEIDKTLAVADRIFGQGMRRTEKATL.

Lys266 carries the N6-(pyridoxal phosphate)lysine modification.

Belongs to the class-III pyridoxal-phosphate-dependent aminotransferase family. HemL subfamily. As to quaternary structure, homodimer. It depends on pyridoxal 5'-phosphate as a cofactor.

It is found in the cytoplasm. It carries out the reaction (S)-4-amino-5-oxopentanoate = 5-aminolevulinate. It participates in porphyrin-containing compound metabolism; protoporphyrin-IX biosynthesis; 5-aminolevulinate from L-glutamyl-tRNA(Glu): step 2/2. This is Glutamate-1-semialdehyde 2,1-aminomutase from Nitrosomonas europaea (strain ATCC 19718 / CIP 103999 / KCTC 2705 / NBRC 14298).